Reading from the N-terminus, the 682-residue chain is MSIFGSILSLQDAINRFPQFEYQINRLEKEQKDTEAASRASFRKHFVRQCQELHRQLDDHRNRIEKAKTDETYKKENALEQLDKLKQRLTALSPEKEQLSFSVSVDSQSEEEKPKMAAIGRRKSTMYNDDESEDSDNDSEIIETDVQLDDPLPSQPQPPQQQHQQPQPKPRQPITITKPLESKTLNERQELDEVISRLQNPSRGDSGEVMEPVVVRGNVFVAIDSWDAEAEGDLELIKGKKYRITQTRSDGWWTALDEYGQRGLVPKTYLQHVKEKPKNVPSKVSSRLGVRDSVIGISTTTDPSRREANRQASRVDDCLGKAYDNDTHLSLVCHMAPRLSTSNIGFHDLFWSHYKDQVYKRTVHISKIIRLVRFEKMPLIEHKALVRMALVDITNPKSTQIVSNVHTLVPRVKSSTWYFEKKESQTRSCIEFSDFVLRSNYRSPTVVLVVEASHLVKTQIGIEEKSLGHTYLRLIIDDKAVPSRTNVLYLDDEVMTKMKLPEASKRRVLVQVMDVPKDKVSYVDSLPDVIVFNALYLPFFHFYRRRAGTILIRDNRNPLSAEFISDPLLSVFPFVCDQHDIMDIMLKIWKTKKKVLAKKNEAEQTAEFFQTFLHTAFFIHGIRMISYDVKDDLTLSIRQQTMQRFVDALNKGLFKQFIADQQCKPINIIDYSLDLLGNHSID.

The stretch at 10 to 100 (LQDAINRFPQ…ALSPEKEQLS (91 aa)) forms a coiled coil. The disordered stretch occupies residues 96 to 188 (KEQLSFSVSV…PLESKTLNER (93 aa)). Over residues 128 to 148 (NDDESEDSDNDSEIIETDVQL) the composition is skewed to acidic residues. The 61-residue stretch at 215–275 (VRGNVFVAID…PKTYLQHVKE (61 aa)) folds into the SH3 domain.

The protein belongs to the nephrocystin-1 family. In terms of tissue distribution, expressed in ciliated sensory neurons of the head (amphid neurons) and the tail in hermaphrodites (phasmid neurons) and males (sensory ray neurons).

Its function is as follows. Plays a role in the extension of dendrites from phasmid ciliated sensory neurons. May be necessary for initial assembly of the cilium. In Caenorhabditis elegans, this protein is Nephrocystin-1-like protein.